We begin with the raw amino-acid sequence, 459 residues long: Methionine aminopeptidase 2-2 (459 aa).

Residues 1–12 (MGSKSPEDHRQG) show a composition bias toward basic and acidic residues. The interval 1–87 (MGSKSPEDHR…KKLSVVQQTS (87 aa)) is disordered. Residues 43-54 (GQDEDGDDDDDE) show a composition bias toward acidic residues. Over residues 55 to 66 (KTGIDLKTNDGA) the composition is skewed to basic and acidic residues. The span at 67–79 (KKKRKRNKKKSKK) shows a compositional bias: basic residues. His210 is a binding site for substrate. Residues Asp231, Asp242, and His311 each contribute to the a divalent metal cation site. His319 is a binding site for substrate. Glu344 and Glu440 together coordinate a divalent metal cation.

This sequence belongs to the peptidase M24A family. Methionine aminopeptidase eukaryotic type 2 subfamily. The cofactor is Co(2+). Requires Zn(2+) as cofactor. Mn(2+) serves as cofactor. It depends on Fe(2+) as a cofactor.

Its subcellular location is the cytoplasm. It catalyses the reaction Release of N-terminal amino acids, preferentially methionine, from peptides and arylamides.. In terms of biological role, cotranslationally removes the N-terminal methionine from nascent proteins. The N-terminal methionine is often cleaved when the second residue in the primary sequence is small and uncharged (Met-Ala-, Cys, Gly, Pro, Ser, Thr, or Val). This Pyrenophora teres f. teres (strain 0-1) (Barley net blotch fungus) protein is Methionine aminopeptidase 2-2.